Here is a 575-residue protein sequence, read N- to C-terminus: 4-substituted benzoates-glutamate ligase GH3.12 (575 aa).

Residues 6 to 33 (DINETFEKQLKDLTSNVKSIQDNLLEEI) are a coiled coil. 95 to 96 (SS) contributes to the AMP binding site. 120 to 123 (YDLR) contacts salicylate. AMP-binding residues include Thr-301, Thr-324, Ser-328, Tyr-347, Asp-398, and Arg-417.

It belongs to the IAA-amido conjugating enzyme family. In terms of assembly, interacts with the P.syringae pv. maculicola effector HopW1-1 (via C-terminus). Expressed in seedlings, mostly in cotyledons, leaves, hypocotyls and sporadically in roots. Not detected in unchallenged adult plants, except in flowers.

With respect to regulation, specifically and reversibly inhibited by salicylic acid (SA). Catalyzes the conjugation of specific amino acids (e.g. Glu and possibly His, Lys, and Met) to their preferred acyl substrates (e.g. 4-substituted benzoates), in a magnesium ion- and ATP-dependent manner. Can use 4-substituted benzoates such as 4-aminobenzoate (pABA), 4-fluorobenzoate and 4-hydroxybenzoate (4-HBA), and, to a lesser extent, benzoate, vanillate and trans-cinnamate, but not 2-substituted benzoates and salicylic acid (SA), as conjugating acyl substrates. Involved in both basal and induced resistance in a SA-dependent manner. Confers resistance to virulent and avirulent pathogens (at least bacteria and oomycetes), and promotes SA glucosides accumulation. Required for the establishment of hyper-sensitive response (HR) upon incompatible interaction and subsequent systemic acquired resistance (SAR). This chain is 4-substituted benzoates-glutamate ligase GH3.12 (GH3.12), found in Arabidopsis thaliana (Mouse-ear cress).